The sequence spans 194 residues: Peptidyl-tRNA hydrolase (194 aa).

Tyrosine 17 lines the tRNA pocket. Histidine 22 functions as the Proton acceptor in the catalytic mechanism. TRNA-binding residues include phenylalanine 68, asparagine 70, and asparagine 116.

This sequence belongs to the PTH family. Monomer.

The protein resides in the cytoplasm. It carries out the reaction an N-acyl-L-alpha-aminoacyl-tRNA + H2O = an N-acyl-L-amino acid + a tRNA + H(+). Its function is as follows. Hydrolyzes ribosome-free peptidyl-tRNAs (with 1 or more amino acids incorporated), which drop off the ribosome during protein synthesis, or as a result of ribosome stalling. Catalyzes the release of premature peptidyl moieties from peptidyl-tRNA molecules trapped in stalled 50S ribosomal subunits, and thus maintains levels of free tRNAs and 50S ribosomes. The polypeptide is Peptidyl-tRNA hydrolase (Glaesserella parasuis serovar 5 (strain SH0165) (Haemophilus parasuis)).